The primary structure comprises 183 residues: uncharacterized protein (183 aa).

The protein belongs to the EUO family.

This is an uncharacterized protein from Chlamydia trachomatis serovar D (strain ATCC VR-885 / DSM 19411 / UW-3/Cx).